We begin with the raw amino-acid sequence, 137 residues long: ATP synthase epsilon chain (137 aa).

The protein belongs to the ATPase epsilon chain family. F-type ATPases have 2 components, CF(1) - the catalytic core - and CF(0) - the membrane proton channel. CF(1) has five subunits: alpha(3), beta(3), gamma(1), delta(1), epsilon(1). CF(0) has three main subunits: a, b and c.

The protein localises to the cell inner membrane. Produces ATP from ADP in the presence of a proton gradient across the membrane. This Magnetococcus marinus (strain ATCC BAA-1437 / JCM 17883 / MC-1) protein is ATP synthase epsilon chain.